The sequence spans 341 residues: L-threonine 3-dehydrogenase (341 aa).

Residue C38 coordinates Zn(2+). Active-site charge relay system residues include T40 and H43. Residues H63, E64, C93, C96, C99, and C107 each coordinate Zn(2+). Residues I175, D195, R200, L262–I264, and I286–Y287 contribute to the NAD(+) site.

Belongs to the zinc-containing alcohol dehydrogenase family. Homotetramer. Zn(2+) serves as cofactor.

It is found in the cytoplasm. The enzyme catalyses L-threonine + NAD(+) = (2S)-2-amino-3-oxobutanoate + NADH + H(+). The protein operates within amino-acid degradation; L-threonine degradation via oxydo-reductase pathway; glycine from L-threonine: step 1/2. Functionally, catalyzes the NAD(+)-dependent oxidation of L-threonine to 2-amino-3-ketobutyrate. This Shewanella baltica (strain OS223) protein is L-threonine 3-dehydrogenase.